Reading from the N-terminus, the 284-residue chain is 2-dehydro-3-deoxyphosphooctonate aldolase (284 aa).

Belongs to the KdsA family.

It localises to the cytoplasm. It catalyses the reaction D-arabinose 5-phosphate + phosphoenolpyruvate + H2O = 3-deoxy-alpha-D-manno-2-octulosonate-8-phosphate + phosphate. The protein operates within carbohydrate biosynthesis; 3-deoxy-D-manno-octulosonate biosynthesis; 3-deoxy-D-manno-octulosonate from D-ribulose 5-phosphate: step 2/3. Its pathway is bacterial outer membrane biogenesis; lipopolysaccharide biosynthesis. The polypeptide is 2-dehydro-3-deoxyphosphooctonate aldolase (Shigella boydii serotype 18 (strain CDC 3083-94 / BS512)).